The primary structure comprises 813 residues: Serine/threonine-protein kinase kin-29 (813 aa).

The Protein kinase domain maps to 18–269 (YDVGRAIGKG…IQNVLAHRWM (252 aa)). ATP-binding positions include 24 to 32 (IGKGNFATV) and lysine 47. Catalysis depends on aspartate 140, which acts as the Proton acceptor. Residues 383–412 (LSSPDCDSDDSSNSDLCDESPLSSLEPNHK) form a disordered region. The segment covering 388–400 (CDSDDSSNSDLCD) has biased composition (acidic residues).

Belongs to the protein kinase superfamily. CAMK Ser/Thr protein kinase family. SNF1 subfamily. Interacts with tax-6. Mg(2+) is required as a cofactor. In terms of processing, autophosphorylated. Elevated cAMP levels appears to act via PKA to directly or indirectly phosphorylate multiple sites on kin-29 and inhibit function.

The protein localises to the cytoplasm. It localises to the nucleus. It carries out the reaction L-seryl-[protein] + ATP = O-phospho-L-seryl-[protein] + ADP + H(+). The enzyme catalyses L-threonyl-[protein] + ATP = O-phospho-L-threonyl-[protein] + ADP + H(+). Regulates chemoreceptor expression by phosphorylating the hda-4 class II histone deacetylase (HDAC) and inhibiting the gene repression functions of hda-4 and the mef-2 transcription factor, enabling the correct sensing and transduction of food signals. Role in determining body size, the dauer decision and serotonin-mediated egg laying. May modulate the Sma/Mab pathway and regulates development in the later larval stages. The sequence is that of Serine/threonine-protein kinase kin-29 from Caenorhabditis briggsae.